The sequence spans 510 residues: MIWHVQNENFILDSTRIFMKAFHLLLFHGSFIFPECILIFGLILLLMIDSTSDQKDIPWLYFISSTSLVISITALLFRWREEPMISFSGNFQTNNFNEIFQFLILLCSTLCIPLSVEYIECTEMAITEFLLFVLTATLGGMFLCGANDLITIFVAPECFSLCSYLLSGYTKRDVRSNEATTKYLLMGGASSSILVHGFSWLYGSSGGEIELQEIVNGLINTQMYNSPGISIALIFITVGIGFKLSPAPSHQWTPDVYEGSPTPVVAFLSVTSKVAASASATRIFDIPFYFSSNEWHLHLEILAILSMILGNLIAITQTSMKRMLAYSSIGQIGYVIIGIIVGDSNDGYASMITYMLFYISMNLGTFARIVSFGLRTGTDNIRDYAGLYTKDPFLALSLALCLLSLGGLPPLAGFFGKLHLFWCGWQAGLYFLVSIGLLTSVVSIYYYLKIIKLLMTGRNQEITPHVRNYRRSPLRSNNSIELSMIVCVIASTIPGISMNPIIAIAQDTLF.

13 consecutive transmembrane segments (helical) span residues 24 to 44, 57 to 77, 99 to 119, 124 to 144, 149 to 169, 183 to 203, 227 to 247, 295 to 315, 323 to 343, 347 to 367, 395 to 415, 418 to 438, and 484 to 504; these read LLLFHGSFIFPECILIFGLIL, IPWLYFISSTSLVISITALLF, IFQFLILLCSTLCIPLSVEYI, MAITEFLLFVLTATLGGMFLC, LITIFVAPECFSLCSYLLSGY, YLLMGGASSSILVHGFSWLYG, PGISIALIFITVGIGFKLSPA, WHLHLEILAILSMILGNLIAI, MLAYSSIGQIGYVIIGIIVGD, GYASMITYMLFYISMNLGTFA, ALSLALCLLSLGGLPPLAGFF, LHLFWCGWQAGLYFLVSIGLL, and MIVCVIASTIPGISMNPIIAI.

The protein belongs to the complex I subunit 2 family. In terms of assembly, NDH is composed of at least 16 different subunits, 5 of which are encoded in the nucleus.

It localises to the plastid. The protein localises to the chloroplast thylakoid membrane. The enzyme catalyses a plastoquinone + NADH + (n+1) H(+)(in) = a plastoquinol + NAD(+) + n H(+)(out). The catalysed reaction is a plastoquinone + NADPH + (n+1) H(+)(in) = a plastoquinol + NADP(+) + n H(+)(out). Its function is as follows. NDH shuttles electrons from NAD(P)H:plastoquinone, via FMN and iron-sulfur (Fe-S) centers, to quinones in the photosynthetic chain and possibly in a chloroplast respiratory chain. The immediate electron acceptor for the enzyme in this species is believed to be plastoquinone. Couples the redox reaction to proton translocation, and thus conserves the redox energy in a proton gradient. This Buxus microphylla (Littleleaf boxwood) protein is NAD(P)H-quinone oxidoreductase subunit 2 B, chloroplastic.